We begin with the raw amino-acid sequence, 445 residues long: Trigger factor (445 aa).

The 86-residue stretch at 163–248 (GDTVVIDYVG…IHEVKVKELP (86 aa)) folds into the PPIase FKBP-type domain. The interval 425–445 (KEVESAKDDADKEASDAKADK) is disordered.

This sequence belongs to the FKBP-type PPIase family. Tig subfamily.

It is found in the cytoplasm. It catalyses the reaction [protein]-peptidylproline (omega=180) = [protein]-peptidylproline (omega=0). Functionally, involved in protein export. Acts as a chaperone by maintaining the newly synthesized protein in an open conformation. Functions as a peptidyl-prolyl cis-trans isomerase. This is Trigger factor from Lacticaseibacillus casei (strain BL23) (Lactobacillus casei).